A 545-amino-acid chain; its full sequence is CWF19-like protein 1 homolog (545 aa).

The interval 306 to 329 (YFYDMDGGRRKRQGGDNNKRDKRP) is disordered.

It belongs to the CWF19 family.

The polypeptide is CWF19-like protein 1 homolog (Drosophila melanogaster (Fruit fly)).